A 177-amino-acid polypeptide reads, in one-letter code: ATP synthase subunit delta (177 aa).

Belongs to the ATPase delta chain family. F-type ATPases have 2 components, F(1) - the catalytic core - and F(0) - the membrane proton channel. F(1) has five subunits: alpha(3), beta(3), gamma(1), delta(1), epsilon(1). F(0) has three main subunits: a(1), b(2) and c(10-14). The alpha and beta chains form an alternating ring which encloses part of the gamma chain. F(1) is attached to F(0) by a central stalk formed by the gamma and epsilon chains, while a peripheral stalk is formed by the delta and b chains.

The protein resides in the cell inner membrane. F(1)F(0) ATP synthase produces ATP from ADP in the presence of a proton or sodium gradient. F-type ATPases consist of two structural domains, F(1) containing the extramembraneous catalytic core and F(0) containing the membrane proton channel, linked together by a central stalk and a peripheral stalk. During catalysis, ATP synthesis in the catalytic domain of F(1) is coupled via a rotary mechanism of the central stalk subunits to proton translocation. Its function is as follows. This protein is part of the stalk that links CF(0) to CF(1). It either transmits conformational changes from CF(0) to CF(1) or is implicated in proton conduction. In Janthinobacterium sp. (strain Marseille) (Minibacterium massiliensis), this protein is ATP synthase subunit delta.